Consider the following 421-residue polypeptide: MKDMDSVSAMMSQIGQRAKEAAASLGFASVERKHAALISAAEHIWTQRAAILEANAKDIAYGRDKGLSDAMMDRLLLDEERLRGIVTSLRSVAEQADPVGEVIAAWDQPTGLHIERVRTPLGVIGVIYESRPNVTVDAGALCLKAGNAVILRGGSESFHSSKALHACLVQGLRDANLPEAAIQLVPTRDRAAVSEMLTMTDTIDVIVPRGGKGLVGLVQREARVPVFAHLEGIVHIYIDAAADAEKTLKVVMNAKTRRTGICGAAECLLIHKDVMPTLGADVIKELMRAGVEVRGDETLSAIQGVVKATADDWGREYLDMIVAARVVDDIDDAMAHIRTHGSNHTDCILTEDARAARRFMTELDSAIVMHNASTQFADGGEFGMGAEIGIATGKMHARGPVGAAQLTSFKYLVSGDGTTRA.

The protein belongs to the gamma-glutamyl phosphate reductase family.

Its subcellular location is the cytoplasm. The catalysed reaction is L-glutamate 5-semialdehyde + phosphate + NADP(+) = L-glutamyl 5-phosphate + NADPH + H(+). Its pathway is amino-acid biosynthesis; L-proline biosynthesis; L-glutamate 5-semialdehyde from L-glutamate: step 2/2. Catalyzes the NADPH-dependent reduction of L-glutamate 5-phosphate into L-glutamate 5-semialdehyde and phosphate. The product spontaneously undergoes cyclization to form 1-pyrroline-5-carboxylate. The protein is Gamma-glutamyl phosphate reductase of Roseobacter denitrificans (strain ATCC 33942 / OCh 114) (Erythrobacter sp. (strain OCh 114)).